We begin with the raw amino-acid sequence, 128 residues long: Small ribosomal subunit protein uS11 (128 aa).

Belongs to the universal ribosomal protein uS11 family. As to quaternary structure, part of the 30S ribosomal subunit. Interacts with proteins S7 and S18. Binds to IF-3.

In terms of biological role, located on the platform of the 30S subunit, it bridges several disparate RNA helices of the 16S rRNA. Forms part of the Shine-Dalgarno cleft in the 70S ribosome. The chain is Small ribosomal subunit protein uS11 from Chromohalobacter salexigens (strain ATCC BAA-138 / DSM 3043 / CIP 106854 / NCIMB 13768 / 1H11).